The following is a 95-amino-acid chain: UPF0213 protein YPK_3712 (95 aa).

The GIY-YIG domain occupies 4 to 79 (SLWHLYLLRT…KQLSKQQKEK (76 aa)).

Belongs to the UPF0213 family.

The protein is UPF0213 protein YPK_3712 of Yersinia pseudotuberculosis serotype O:3 (strain YPIII).